A 406-amino-acid chain; its full sequence is Tyrosine--tRNA ligase (406 aa).

Y35 is an L-tyrosine binding site. The 'HIGH' region motif lies at 40–49 (ATSASLHIGH). 2 residues coordinate L-tyrosine: Y167 and Q171. The short motif at 227 to 231 (KMGKS) is the 'KMSKS' region element. K230 contributes to the ATP binding site. The 65-residue stretch at 341 to 405 (ILLVDLMVLA…IGKKKILRIV (65 aa)) folds into the S4 RNA-binding domain.

The protein belongs to the class-I aminoacyl-tRNA synthetase family. TyrS type 1 subfamily. As to quaternary structure, homodimer.

The protein localises to the cytoplasm. It carries out the reaction tRNA(Tyr) + L-tyrosine + ATP = L-tyrosyl-tRNA(Tyr) + AMP + diphosphate + H(+). Functionally, catalyzes the attachment of tyrosine to tRNA(Tyr) in a two-step reaction: tyrosine is first activated by ATP to form Tyr-AMP and then transferred to the acceptor end of tRNA(Tyr). In Borrelia recurrentis (strain A1), this protein is Tyrosine--tRNA ligase.